Consider the following 404-residue polypeptide: Deoxyguanosinetriphosphate triphosphohydrolase-like protein (404 aa).

The interval 1–32 (MAVGMAAPHATYASDPARSRGRLFDEPPSKTR) is disordered. Positions 22–32 (RLFDEPPSKTR) are enriched in basic and acidic residues. The HD domain occupies 69–217 (RLTHTLEVAQ…AAIADDIAYD (149 aa)).

Belongs to the dGTPase family. Type 2 subfamily.

The protein is Deoxyguanosinetriphosphate triphosphohydrolase-like protein of Nitrobacter hamburgensis (strain DSM 10229 / NCIMB 13809 / X14).